We begin with the raw amino-acid sequence, 283 residues long: uncharacterized protein (283 aa).

3 Solcar repeats span residues 14–95 (QPVW…LKHL), 102–185 (NDHA…SEAV), and 190–274 (GLAL…TLQG). Transmembrane regions (helical) follow at residues 20–40 (TLAGGISSVICRFMIAPFDVI), 70–90 (GNVVAELLYLVYGAAEFVAFS), 105–125 (AVNFLCGTSAGIFATLTSYPL), 157–177 (FFPGLKFSVIQIGPYAGCFFM), 184–204 (AVLSPLGLALSSTLSGVIAGA), and 249–266 (GLSVSMLKVAPGRAITML).

It belongs to the mitochondrial carrier (TC 2.A.29) family.

Its subcellular location is the mitochondrion inner membrane. This is an uncharacterized protein from Schizosaccharomyces pombe (strain 972 / ATCC 24843) (Fission yeast).